The sequence spans 784 residues: MAQLLNSILSVIDVFHKYAKGNGDCALLCKEELKQLLLAEFGDILQRPNDPETVETILNLLDQDRDGHIDFHEYLLLVFQLVQACYHKLDNKSHGGRTSQQERGQEGAQDCKFPGNTGRQHRQRHEEERQNSHHSQPERQDGDSHHGQPERQDRDSHHGQSEKQDRDSHHSQPERQDRDSHHNQSERQDKDFSFDQSERQSQDSSSGKKVSHKSTSGQAKWQGHIFALNRCEKPIQDSHYGQSERHTQQSETLGQASHFNQTNQQKSGSYCGQSERLGQELGCGQTDRQGQSSHYGQTDRQDQSYHYGQTDRQGQSSHYSQTDRQGQSSHYSQPDRQGQSSHYGQMDRKGQCYHYDQTNRQGQGSHYSQPNRQGQSSHYGQPDTQDQSSHYGQTDRQDQSSHYGQTERQGQSSHYSQMDRQGQGSHYGQTDRQGQSSHYGQPDRQGQNSHYGQTDRQGQSSHYGQTDRQGQSSHYSQPDKQGQSSHYGKIDRQDQSYHYGQPDGQGQSSHYGQTDRQGQSFHYGQPDRQGQSSHYSQMDRQGQSSHYGQTDRQGQSSHYGQTDRQGQSYHYGQTDRQGQSSHYIQSQTGEIQGQNKYFQGTEGTRKASYVEQSGRSGRLSQQTPGQEGYQNQGQGFQSRDSQQNGHQVWEPEEDSQHHQHKLLAQIQQERPLCHKGRDWQSCSSEQGHRQAQTRQSHGEGLSHWAEEEQGHQTWDRHSHESQEGPCGTQDRRTHKDEQNHQRRDRQTHEHEQSHQRRDRQTHEDKQNRQRRDRQTHEDEQNHQR.

Positions 1–91 are S-100-like; the sequence is MAQLLNSILS…VQACYHKLDN (91 aa). 2 EF-hand domains span residues 13 to 48 and 49 to 84; these read DVFHKYAKGNGDCALLCKEELKQLLLAEFGDILQRP and NDPETVETILNLLDQDRDGHIDFHEYLLLVFQLVQA. The Ca(2+) site is built by Glu-32, Asp-62, Asp-64, Asp-66, His-68, and Glu-73. 4 disordered regions span residues 92-221, 282-584, 601-661, and 677-784; these read KSHG…QAKW, GCGQ…SHYI, TEGT…HQHK, and RDWQ…NHQR. The segment covering 124–201 has biased composition (basic and acidic residues); sequence RHEEERQNSH…FSFDQSERQS (78 aa). Composition is skewed to polar residues over residues 286-296, 304-343, 356-392, 400-486, 504-584, 610-646, and 680-695; these read TDRQGQSSHYG, SYHYGQTDRQGQSSHYSQTDRQGQSSHYSQPDRQGQSSHY, DQTNRQGQGSHYSQPNRQGQSSHYGQPDTQDQSSHYG, SSHY…QSSH, GQGQ…SHYI, VEQSGRSGRLSQQTPGQEGYQNQGQGFQSRDSQQNGH, and QSCSSEQGHRQAQTRQ. Composition is skewed to basic and acidic residues over residues 704–722 and 729–784; these read WAEEEQGHQTWDRHSHESQ and QDRR…NHQR.

It belongs to the S100-fused protein family. In terms of processing, potential substrate of transglutaminase. Some arginines are probably converted to citrullines by peptidylarginine deimidase. Expression is scattered in the normal epidermis but strong in the acrosyringium, the inner hair root sheath and in the filiform papilli of the tongue.

The protein resides in the secreted. It is found in the extracellular space. Its subcellular location is the extracellular matrix. Involved in the cornified cell envelope formation. Multifunctional epidermal matrix protein. Reversibly binds calcium. In Homo sapiens (Human), this protein is Repetin (RPTN).